The sequence spans 649 residues: Protein mitoshell (649 aa).

Residues 167–176 (LRSEARKPRP) show a composition bias toward basic and acidic residues. 3 disordered regions span residues 167 to 193 (LRSE…ESGA), 389 to 414 (HGPS…EPTS), and 485 to 512 (ALPS…VRSY). The span at 177 to 191 (ESVVPEESSISSLES) shows a compositional bias: low complexity. Polar residues-rich tracts occupy residues 393–414 (AFST…EPTS) and 485–503 (ALPS…SPQS).

In terms of biological role, required for male meiotic cytokinesis through its involvement in the regulation of mitochondrial aggregation and fusion, astral spindle assembly and contractile ring formation. The protein is Protein mitoshell of Drosophila melanogaster (Fruit fly).